Consider the following 55-residue polypeptide: Large ribosomal subunit protein bL33 (55 aa).

Over residues 1–11 the composition is skewed to basic and acidic residues; that stretch reads MAKGARDKIKL. The interval 1–24 is disordered; the sequence is MAKGARDKIKLESTAGTGHFYTTT. Residues 14-24 are compositionally biased toward polar residues; sequence TAGTGHFYTTT.

This sequence belongs to the bacterial ribosomal protein bL33 family.

This Burkholderia multivorans (strain ATCC 17616 / 249) protein is Large ribosomal subunit protein bL33.